Reading from the N-terminus, the 365-residue chain is tRNA/tmRNA (uracil-C(5))-methyltransferase (365 aa).

Positions 189, 217, 222, 238, and 298 each coordinate S-adenosyl-L-methionine. The active-site Nucleophile is the Cys323. Glu357 functions as the Proton acceptor in the catalytic mechanism.

The protein belongs to the class I-like SAM-binding methyltransferase superfamily. RNA M5U methyltransferase family. TrmA subfamily.

The catalysed reaction is uridine(54) in tRNA + S-adenosyl-L-methionine = 5-methyluridine(54) in tRNA + S-adenosyl-L-homocysteine + H(+). It carries out the reaction uridine(341) in tmRNA + S-adenosyl-L-methionine = 5-methyluridine(341) in tmRNA + S-adenosyl-L-homocysteine + H(+). In terms of biological role, dual-specificity methyltransferase that catalyzes the formation of 5-methyluridine at position 54 (m5U54) in all tRNAs, and that of position 341 (m5U341) in tmRNA (transfer-mRNA). The chain is tRNA/tmRNA (uracil-C(5))-methyltransferase from Shewanella halifaxensis (strain HAW-EB4).